Here is a 156-residue protein sequence, read N- to C-terminus: Small ribosomal subunit protein uS7 (156 aa).

Belongs to the universal ribosomal protein uS7 family. As to quaternary structure, part of the 30S ribosomal subunit. Contacts proteins S9 and S11.

In terms of biological role, one of the primary rRNA binding proteins, it binds directly to 16S rRNA where it nucleates assembly of the head domain of the 30S subunit. Is located at the subunit interface close to the decoding center, probably blocks exit of the E-site tRNA. This chain is Small ribosomal subunit protein uS7, found in Rhodospirillum rubrum (strain ATCC 11170 / ATH 1.1.1 / DSM 467 / LMG 4362 / NCIMB 8255 / S1).